The following is a 110-amino-acid chain: MKETKRFFNKNNRLNKGYAKTFSINEPDNNFYRKKFEHILPPVDLISEYESIYPGTLQELMHMAQKEQAHKHAIDLKNLKIQERIAKLTRICLLIFGIGLVVLIFLKLLK.

A helical membrane pass occupies residues 88–108 (LTRICLLIFGIGLVVLIFLKL).

The protein localises to the membrane. This is an uncharacterized protein from Rickettsia prowazekii (strain Madrid E).